We begin with the raw amino-acid sequence, 730 residues long: Catalase-peroxidase (730 aa).

The span at 1–11 shows a compositional bias: basic and acidic residues; it reads MDAKTDDKDAG. An N-terminal signal peptide occupies residues 1–21; sequence MDAKTDDKDAGKCPFSSGSHA. The interval 1-24 is disordered; the sequence is MDAKTDDKDAGKCPFSSGSHAHRN. Positions 96-218 form a cross-link, tryptophyl-tyrosyl-methioninium (Trp-Tyr) (with M-244); the sequence is WHSAGTYRIS…LGAVQMGLIY (123 aa). H97 functions as the Proton acceptor in the catalytic mechanism. Residues 218–244 constitute a cross-link (tryptophyl-tyrosyl-methioninium (Tyr-Met) (with W-96)); that stretch reads YVNPEGPNGNPDPVGSAKDIRETFYRM. H259 contributes to the heme b binding site.

This sequence belongs to the peroxidase family. Peroxidase/catalase subfamily. Homodimer or homotetramer. Requires heme b as cofactor. Formation of the three residue Trp-Tyr-Met cross-link is important for the catalase, but not the peroxidase activity of the enzyme.

It carries out the reaction H2O2 + AH2 = A + 2 H2O. The enzyme catalyses 2 H2O2 = O2 + 2 H2O. Bifunctional enzyme with both catalase and broad-spectrum peroxidase activity. In Rhodopseudomonas palustris (strain BisA53), this protein is Catalase-peroxidase.